Reading from the N-terminus, the 547-residue chain is Immunoglobulin epsilon heavy chain (547 aa).

Gln1 is subject to Pyrrolidone carboxylic acid. 5 Ig-like domains span residues 1–120 (QVQL…TEVT), 130–223 (PSVF…KTFS), 232–329 (PTVK…KKCA), 333–437 (PRGV…TKTS), and 443–542 (PEVY…RAVS). The segment at 1–124 (QVQLVQSGAE…EGTEVTYTVS (124 aa)) is variable (V) domain, involved in antigen recognition. 6 cysteine pairs are disulfide-bonded: Cys22–Cys96, Cys139–Cys225, Cys153–Cys207, Cys254–Cys312, Cys358–Cys418, and Cys464–Cys524. A constant (C) domain region spans residues 125–547 (GAWTLPSVFP…QRAVSVNPGK (423 aa)). 7 N-linked (GlcNAc...) asparagine glycosylation sites follow: Asn145, Asn173, Asn219, Asn265, Asn371, Asn383, and Asn394.

Immunoglobulins are composed of two identical heavy chains and two identical light chains; disulfide-linked.

The protein localises to the secreted. The protein resides in the cell membrane. Functionally, immunoglobulins, also known as antibodies, are membrane-bound or secreted glycoproteins produced by B lymphocytes. In the recognition phase of humoral immunity, the membrane-bound immunoglobulins serve as receptors which, upon binding of a specific antigen, trigger the clonal expansion and differentiation of B lymphocytes into immunoglobulins-secreting plasma cells. Secreted immunoglobulins mediate the effector phase of humoral immunity, which results in the elimination of bound antigens. The antigen binding site is formed by the variable domain of one heavy chain, together with that of its associated light chain. Thus, each immunoglobulin has two antigen binding sites with remarkable affinity for a particular antigen. The variable domains are assembled by a process called V-(D)-J rearrangement and can then be subjected to somatic hypermutations which, after exposure to antigen and selection, allow affinity maturation for a particular antigen. The chain is Immunoglobulin epsilon heavy chain from Homo sapiens (Human).